Consider the following 249-residue polypeptide: Bacillaene synthase decarboxylase PksI (249 aa).

Histidine 230 is an active-site residue.

The protein belongs to the enoyl-CoA hydratase/isomerase family. In terms of assembly, homotrimer. Does not form a heterotrimeric complex with PksH.

It is found in the cytoplasm. The protein operates within antibiotic biosynthesis; bacillaene biosynthesis. Involved in some intermediate steps for the synthesis of the antibiotic polyketide bacillaene which is involved in secondary metabolism. Catalyzes the decarboxylation of the 3-methylglutaconyl group tethered to PksL to a 3-methylcrotonyl moiety. This Bacillus subtilis (strain 168) protein is Bacillaene synthase decarboxylase PksI (pksI).